A 107-amino-acid chain; its full sequence is Integration host factor subunit beta (107 aa).

A disordered region spans residues 55–107 (RRPARVGRNPKSGEKVQVPEKHVPHFKPGKELRERVDGRAGEPLKNDEPEDAQ). Residues 65 to 101 (KSGEKVQVPEKHVPHFKPGKELRERVDGRAGEPLKND) are compositionally biased toward basic and acidic residues.

This sequence belongs to the bacterial histone-like protein family. In terms of assembly, heterodimer of an alpha and a beta chain.

This protein is one of the two subunits of integration host factor, a specific DNA-binding protein that functions in genetic recombination as well as in transcriptional and translational control. The polypeptide is Integration host factor subunit beta (Burkholderia pseudomallei (strain K96243)).